An 86-amino-acid chain; its full sequence is Cytochrome c-555 (86 aa).

The heme c site is built by Cys-14, Cys-17, His-18, and Met-60.

Binds 1 heme c group covalently per subunit.

Functionally, this basic c-type monoheme cytochrome has been found exclusively in the green photosynthetic bacteria, although its role in bacterial photosynthesis is not established. It has an unusually low redox potential compared with mitochondrial cytochrome c. It is reactive with cytochrome c oxidases but not with reductases. The sequence is that of Cytochrome c-555 from Chlorobaculum thiosulfatiphilum (Chlorobium limicola f.sp. thiosulfatophilum).